The following is a 208-amino-acid chain: 3-demethoxyubiquinol 3-hydroxylase (208 aa).

Fe cation-binding residues include E57, E87, H90, E139, E171, and H174.

It belongs to the COQ7 family. Fe cation serves as cofactor.

The protein localises to the cell membrane. It carries out the reaction a 5-methoxy-2-methyl-3-(all-trans-polyprenyl)benzene-1,4-diol + AH2 + O2 = a 3-demethylubiquinol + A + H2O. It functions in the pathway cofactor biosynthesis; ubiquinone biosynthesis. In terms of biological role, catalyzes the hydroxylation of 2-nonaprenyl-3-methyl-6-methoxy-1,4-benzoquinol during ubiquinone biosynthesis. The polypeptide is 3-demethoxyubiquinol 3-hydroxylase (Burkholderia ambifaria (strain ATCC BAA-244 / DSM 16087 / CCUG 44356 / LMG 19182 / AMMD) (Burkholderia cepacia (strain AMMD))).